The sequence spans 175 residues: NADH-ubiquinone oxidoreductase chain 6 (175 aa).

The next 5 membrane-spanning stretches (helical) occupy residues 1–21 (MMMYIVFILSIIFVISFVGVS), 25–45 (SPIYGGLGLIVGGGVGCGVIL), 47–67 (FGGSFLGLMVFLIYLGGMLVV), 88–108 (VVLGAFVLGLVVEFLIVIYAL), and 149–169 (YGVWLVIVTGWSLFISVVIIM).

It belongs to the complex I subunit 6 family. Core subunit of respiratory chain NADH dehydrogenase (Complex I) which is composed of 45 different subunits.

The protein localises to the mitochondrion inner membrane. It carries out the reaction a ubiquinone + NADH + 5 H(+)(in) = a ubiquinol + NAD(+) + 4 H(+)(out). In terms of biological role, core subunit of the mitochondrial membrane respiratory chain NADH dehydrogenase (Complex I) which catalyzes electron transfer from NADH through the respiratory chain, using ubiquinone as an electron acceptor. Essential for the catalytic activity and assembly of complex I. The sequence is that of NADH-ubiquinone oxidoreductase chain 6 (MT-ND6) from Balaenoptera physalus (Fin whale).